The primary structure comprises 304 residues: ATP phosphoribosyltransferase (304 aa).

It belongs to the ATP phosphoribosyltransferase family. Long subfamily. It depends on Mg(2+) as a cofactor.

The protein localises to the cytoplasm. It catalyses the reaction 1-(5-phospho-beta-D-ribosyl)-ATP + diphosphate = 5-phospho-alpha-D-ribose 1-diphosphate + ATP. Its pathway is amino-acid biosynthesis; L-histidine biosynthesis; L-histidine from 5-phospho-alpha-D-ribose 1-diphosphate: step 1/9. With respect to regulation, feedback inhibited by histidine. Its function is as follows. Catalyzes the condensation of ATP and 5-phosphoribose 1-diphosphate to form N'-(5'-phosphoribosyl)-ATP (PR-ATP). Has a crucial role in the pathway because the rate of histidine biosynthesis seems to be controlled primarily by regulation of HisG enzymatic activity. The chain is ATP phosphoribosyltransferase from Xylella fastidiosa (strain M12).